A 307-amino-acid polypeptide reads, in one-letter code: Coproporphyrin III ferrochelatase (307 aa).

Fe-coproporphyrin III contacts are provided by residues Tyr-12, Arg-29, 45 to 46 (RY), Ser-53, and Tyr-124. The Fe(2+) site is built by His-181 and Glu-263.

Belongs to the ferrochelatase family.

It is found in the cytoplasm. The catalysed reaction is Fe-coproporphyrin III + 2 H(+) = coproporphyrin III + Fe(2+). It functions in the pathway porphyrin-containing compound metabolism; protoheme biosynthesis. Functionally, involved in coproporphyrin-dependent heme b biosynthesis. Catalyzes the insertion of ferrous iron into coproporphyrin III to form Fe-coproporphyrin III. The polypeptide is Coproporphyrin III ferrochelatase (Staphylococcus saprophyticus subsp. saprophyticus (strain ATCC 15305 / DSM 20229 / NCIMB 8711 / NCTC 7292 / S-41)).